A 548-amino-acid chain; its full sequence is Chaperonin GroEL (548 aa).

ATP is bound by residues 30–33, lysine 51, 87–91, glycine 415, 479–481, and aspartate 495; these read TLGP, DGTTT, and NAA.

This sequence belongs to the chaperonin (HSP60) family. Forms a cylinder of 14 subunits composed of two heptameric rings stacked back-to-back. Interacts with the co-chaperonin GroES.

Its subcellular location is the cytoplasm. It catalyses the reaction ATP + H2O + a folded polypeptide = ADP + phosphate + an unfolded polypeptide.. In terms of biological role, together with its co-chaperonin GroES, plays an essential role in assisting protein folding. The GroEL-GroES system forms a nano-cage that allows encapsulation of the non-native substrate proteins and provides a physical environment optimized to promote and accelerate protein folding. In Lawsonia intracellularis (strain PHE/MN1-00), this protein is Chaperonin GroEL.